A 306-amino-acid chain; its full sequence is Tryptophan 2,3-dioxygenase (306 aa).

Positions 1–33 are disordered; it reads MQPPGDDAAPRCPFAGAHAPDAPHVPEAAGDDA. Residues 75–79, Y137, and R141 contribute to the substrate site; that span reads FIIQH. H264 contacts heme. Residue T278 coordinates substrate.

Belongs to the tryptophan 2,3-dioxygenase family. Homotetramer. The cofactor is heme.

The enzyme catalyses L-tryptophan + O2 = N-formyl-L-kynurenine. It participates in amino-acid degradation; L-tryptophan degradation via kynurenine pathway; L-kynurenine from L-tryptophan: step 1/2. Heme-dependent dioxygenase that catalyzes the oxidative cleavage of the L-tryptophan (L-Trp) pyrrole ring and converts L-tryptophan to N-formyl-L-kynurenine. Catalyzes the oxidative cleavage of the indole moiety. The chain is Tryptophan 2,3-dioxygenase from Burkholderia pseudomallei (strain 1106a).